Reading from the N-terminus, the 267-residue chain is Endonuclease NucS (267 aa).

This sequence belongs to the NucS endonuclease family.

Its subcellular location is the cytoplasm. Functionally, cleaves both 3' and 5' ssDNA extremities of branched DNA structures. The polypeptide is Endonuclease NucS (Pyrococcus furiosus (strain ATCC 43587 / DSM 3638 / JCM 8422 / Vc1)).